The sequence spans 390 residues: S-adenosylmethionine synthase (390 aa).

Glu12 is a Mg(2+) binding site. His18 serves as a coordination point for ATP. Glu46 is a K(+) binding site. L-methionine is bound by residues Glu59 and Gln102. Residues 170–172 (DGK), 238–241 (SGRF), Asp249, 255–256 (RK), Ala272, Lys276, and Lys280 each bind ATP. Asp249 serves as a coordination point for L-methionine. Residue Lys280 coordinates L-methionine.

This sequence belongs to the AdoMet synthase family. As to quaternary structure, homotetramer. It depends on Mn(2+) as a cofactor. Mg(2+) is required as a cofactor. Co(2+) serves as cofactor. The cofactor is K(+).

The protein resides in the cytoplasm. It catalyses the reaction L-methionine + ATP + H2O = S-adenosyl-L-methionine + phosphate + diphosphate. It participates in amino-acid biosynthesis; S-adenosyl-L-methionine biosynthesis; S-adenosyl-L-methionine from L-methionine: step 1/1. In terms of biological role, catalyzes the formation of S-adenosylmethionine from methionine and ATP. The reaction comprises two steps that are both catalyzed by the same enzyme: formation of S-adenosylmethionine (AdoMet) and triphosphate, and subsequent hydrolysis of the triphosphate. This Chlamydomonas reinhardtii (Chlamydomonas smithii) protein is S-adenosylmethionine synthase (METM).